We begin with the raw amino-acid sequence, 65 residues long: MPKMKTKSSAKKRFKVRSSGGIKRSQAFKRHILTKKTTKSKRQLRGMTEVHASDEKLIRAMLPYA.

Positions 1–16 (MPKMKTKSSAKKRFKV) are enriched in basic residues. Positions 1–26 (MPKMKTKSSAKKRFKVRSSGGIKRSQ) are disordered.

It belongs to the bacterial ribosomal protein bL35 family.

In Azoarcus sp. (strain BH72), this protein is Large ribosomal subunit protein bL35.